We begin with the raw amino-acid sequence, 254 residues long: Alcohol dehydrogenase (254 aa).

10–33 (FVAGLGGIGLDTSREIVKSGPKNL) contributes to the NAD(+) binding site. Ser-138 lines the substrate pocket. Tyr-151 acts as the Proton acceptor in catalysis.

The protein belongs to the short-chain dehydrogenases/reductases (SDR) family. Homodimer.

The enzyme catalyses a primary alcohol + NAD(+) = an aldehyde + NADH + H(+). It catalyses the reaction a secondary alcohol + NAD(+) = a ketone + NADH + H(+). In Drosophila borealis (Fruit fly), this protein is Alcohol dehydrogenase (Adh).